The following is a 290-amino-acid chain: Acetyl-coenzyme A carboxylase carboxyl transferase subunit beta (290 aa).

One can recognise a CoA carboxyltransferase N-terminal domain in the interval 28 to 290 (IMTKCPKCKK…SRGGDEWHTN (263 aa)). Zn(2+) contacts are provided by Cys-32, Cys-35, Cys-51, and Cys-54. The C4-type zinc finger occupies 32–54 (CPKCKKIMYTKELVKNLRVCISC).

Belongs to the AccD/PCCB family. Acetyl-CoA carboxylase is a heterohexamer composed of biotin carboxyl carrier protein (AccB), biotin carboxylase (AccC) and two subunits each of ACCase subunit alpha (AccA) and ACCase subunit beta (AccD). Requires Zn(2+) as cofactor.

It localises to the cytoplasm. The catalysed reaction is N(6)-carboxybiotinyl-L-lysyl-[protein] + acetyl-CoA = N(6)-biotinyl-L-lysyl-[protein] + malonyl-CoA. The protein operates within lipid metabolism; malonyl-CoA biosynthesis; malonyl-CoA from acetyl-CoA: step 1/1. Component of the acetyl coenzyme A carboxylase (ACC) complex. Biotin carboxylase (BC) catalyzes the carboxylation of biotin on its carrier protein (BCCP) and then the CO(2) group is transferred by the transcarboxylase to acetyl-CoA to form malonyl-CoA. The polypeptide is Acetyl-coenzyme A carboxylase carboxyl transferase subunit beta (Anoxybacillus flavithermus (strain DSM 21510 / WK1)).